Here is a 309-residue protein sequence, read N- to C-terminus: Probable nitrogen assimilation transcriptional activator (309 aa).

The HTH lysR-type domain maps to 1–57 (MRLEQLQAALRVAETGSFQEAAQKVGCNQSTISRQVKGLEDELGIALFRRQGRMKLT). The H-T-H motif DNA-binding region spans 18-37 (FQEAAQKVGCNQSTISRQVK).

It belongs to the LysR transcriptional regulatory family.

Seems to regulate utilization of fixed nitrogen by controlling the expression of a certain gene(s) involved in nitrogen metabolism. In Synechococcus elongatus (strain ATCC 33912 / PCC 7942 / FACHB-805) (Anacystis nidulans R2), this protein is Probable nitrogen assimilation transcriptional activator (ntcB).